The sequence spans 174 residues: Amino-acid acetyltransferase (174 aa).

The N-acetyltransferase domain maps to 10–148; that stretch reads PVVRRARTSD…VFDEMCRSYD (139 aa).

This sequence belongs to the acetyltransferase family. As to quaternary structure, homodimer and homotetramer.

It carries out the reaction L-glutamate + acetyl-CoA = N-acetyl-L-glutamate + CoA + H(+). It participates in amino-acid biosynthesis; L-arginine biosynthesis; N(2)-acetyl-L-ornithine from L-glutamate: step 1/4. Its activity is regulated as follows. Inhibited by L-arginine. Functionally, catalyzes the conversion of L-glutamate to alpha-N-acetyl-L-glutamate. L-glutamine is a significantly better substrate compared to L-glutamate. This is Amino-acid acetyltransferase (argA) from Mycobacterium tuberculosis (strain ATCC 25618 / H37Rv).